A 290-amino-acid chain; its full sequence is Ribosomal RNA small subunit methyltransferase A (290 aa).

6 residues coordinate S-adenosyl-L-methionine: Asn27, Leu29, Gly54, Glu75, Asp100, and Asn125.

It belongs to the class I-like SAM-binding methyltransferase superfamily. rRNA adenine N(6)-methyltransferase family. RsmA subfamily.

The protein localises to the cytoplasm. The enzyme catalyses adenosine(1518)/adenosine(1519) in 16S rRNA + 4 S-adenosyl-L-methionine = N(6)-dimethyladenosine(1518)/N(6)-dimethyladenosine(1519) in 16S rRNA + 4 S-adenosyl-L-homocysteine + 4 H(+). Functionally, specifically dimethylates two adjacent adenosines (A1518 and A1519) in the loop of a conserved hairpin near the 3'-end of 16S rRNA in the 30S particle. May play a critical role in biogenesis of 30S subunits. This is Ribosomal RNA small subunit methyltransferase A from Streptococcus pneumoniae (strain Hungary19A-6).